Here is a 737-residue protein sequence, read N- to C-terminus: MIISKSFKAPLKFSVKSSTAPVISNHPPMENHPKRQRTTRLAARNLKRKLSHNTDGAPIVTQLIDIDDEPIDLVVAIRRHVEVLNSSFSDPDFDHEAVKEAAADIADLAKIDENVEIIVENGAIPALVRYLESPLVVCGNVPKSCEHKLEKDCALALGLIAAIQPGYQQLIVDAGAIVPTVKLLKRRGECGECMFANAVIRRAADIITNIAHDNPRIKTNIRVEGGIAPLVELLNFPDVKVQRAAAGALRTVSFRNDENKSQIVELNALPTLVLMLQSQDSTVHGEAIGAIGNLVHSSPDIKKEVIRAGALQPVIGLLSSTCLETQREAALLIGQFAAPDSDCKVHIAQRGAITPLIKMLESSDEQVVEMSAFALGRLAQDAHNQAGIAHRGGIISLLNLLDVKTGSVQHNAAFALYGLADNEENVADFIKAGGIQKLQDDNFTVQPTRDCVVRTLKRLQNKIHGPVLNQLLYLMRTAEKTVQIRIALALAHLCDPKDGKLIFIDNNGVEFLLELLYFSSNKQQRYSSSALYELAKKATSFAPEDSAPCSPTQQVFLGEKFVNNPTMSDVTFLIDGKQFYAHKIGLVASSDIFRAMFDGLYKERNAQNVEIPNIRWEVFELMMKFIYSGRINIAKHLAKDLLVAADQYLLEGLKRQCEYTIAQEICLDNIPEMYELADTFNASALRRACTLFVLEHFTKLSSQLWFAKFVKQIIPEIRSYMTDILTRPVEASPPTVV.

ARM repeat units lie at residues 112-154 (DENV…KDCA), 165-212 (PGYQ…NIAH), 215-254 (PRIK…TVSF), 257-296 (DENK…NLVH), 299-338 (PDIK…QFAA), 341-380 (SDCK…RLAQ), 382-421 (AHNQ…GLAD), 456-495 (LKRL…HLCD), and 497-536 (KDGK…ELAK). The BTB domain maps to 568–635 (SDVTFLIDGK…IYSGRINIAK (68 aa)).

In terms of assembly, forms a heterodimeric complex with TCP24. Interacts with the origin recognition complex (preRC) components ORC1A, ORC1B, CDT1A and CDT1B. Interacts with DUF7/AIP1. In terms of tissue distribution, weakly expressed in the emerging lateral roots and mainly expressed in the shoot apex, young leaves and flower buds.

It is found in the nucleus. Its pathway is protein modification; protein ubiquitination. Functionally, may act as a substrate-specific adapter of an E3 ubiquitin-protein ligase complex (CUL3-RBX1-BTB) which mediates the ubiquitination and subsequent proteasomal degradation of target proteins. In association with TCP24, exerts a negative role in cell proliferation in leaves, possibly by inhibiting mitotic DNA replication. This is ARMADILLO BTB ARABIDOPSIS PROTEIN 1 (ABAP1) from Arabidopsis thaliana (Mouse-ear cress).